The primary structure comprises 63 residues: Cecropin-1/3 (63 aa).

Residues 1–23 (MNFYKVFIFVALILAISLGQSEA) form the signal peptide. Arg62 bears the Arginine amide mark.

Belongs to the cecropin family.

It localises to the secreted. Cecropins have lytic and antibacterial activity against several Gram-positive and Gram-negative bacteria. This chain is Cecropin-1/3 (Cec1), found in Drosophila virilis (Fruit fly).